A 92-amino-acid chain; its full sequence is Large ribosomal subunit protein bL27 (92 aa).

Positions 1 to 9 (MLKLNLQFF) are excised as a propeptide. The segment at 14–34 (GVGSTKNGRDSQSKRLGAKRA) is disordered.

The protein belongs to the bacterial ribosomal protein bL27 family. The N-terminus is cleaved by ribosomal processing cysteine protease Prp.

The protein is Large ribosomal subunit protein bL27 of Exiguobacterium sibiricum (strain DSM 17290 / CCUG 55495 / CIP 109462 / JCM 13490 / 255-15).